Consider the following 309-residue polypeptide: Protein-L-isoaspartate O-methyltransferase 2 (309 aa).

The short motif at Lys23–Lys28 is the Nuclear localization signal element. Ser144 is a catalytic residue.

Belongs to the methyltransferase superfamily. L-isoaspartyl/D-aspartyl protein methyltransferase family. In terms of tissue distribution, expressed in rosette leaves, stems, cauline leaves, flowers and developing seeds.

It localises to the nucleus. The catalysed reaction is [protein]-L-isoaspartate + S-adenosyl-L-methionine = [protein]-L-isoaspartate alpha-methyl ester + S-adenosyl-L-homocysteine. Catalyzes the methyl esterification of L-isoaspartyl residues in peptides and proteins that result from spontaneous decomposition of normal L-aspartyl and L-asparaginyl residues. It plays a role in the repair and/or degradation of damaged proteins. The protein is Protein-L-isoaspartate O-methyltransferase 2 (PIMT2) of Arabidopsis thaliana (Mouse-ear cress).